The following is a 564-amino-acid chain: MRSDKIKKGVEQAPARSLLHATGQIKSPGDMDKPFIAICNSYIDIVPGHVHLRELADVAKEAIREAGGIPFEFNTIGVDDGIAMGHIGMRYSLPSREVIADAAETVINAHWFDGVFYIPNCDKITPGMLLASVRTNVPAIFCSGGPMKAGLSAHGKALTLSSVFEAVGAFKDGSMSQEDFLDMEANACPTCGSCAGMFTANSMNCLMEILGMAVPGNGTTLAVSDARRELIRESAFHLMDLVKKDIRPRDIITKDAIDDAFALDMAMGGSTNTVLHTLALANEAGIEDYDLERINDIAKRVPYLSKIAPSSSYSMHDVHEAGGVSAIVKELVDLGGAIHPDRITVTGKTIRENVADAKINNTDVIHPKENPYSPVGGLSMLFGNIAPKGAAIKVGGVDPSVQVFKGEAICFSSHDEAVEAIDNHTVREGHVVVIRYEGPKGGPGMPEMLAPTSSIVGRGLGKDVALITDGRFSGATRGIAVGHISPEAAAGGPIALVHDGDIITIDLPNRTLNVDVSDEVLEERRKELPKFKAKVKTGYLARYTALVTSAHTGGILQIPEDLID.

Position 80 (D80) interacts with Mg(2+). C121 contributes to the [2Fe-2S] cluster binding site. 2 residues coordinate Mg(2+): D122 and K123. N6-carboxylysine is present on K123. C194 lines the [2Fe-2S] cluster pocket. E447 lines the Mg(2+) pocket. Residue S473 is the Proton acceptor of the active site.

It belongs to the IlvD/Edd family. Homodimer. It depends on [2Fe-2S] cluster as a cofactor. The cofactor is Mg(2+).

It carries out the reaction (2R)-2,3-dihydroxy-3-methylbutanoate = 3-methyl-2-oxobutanoate + H2O. The enzyme catalyses (2R,3R)-2,3-dihydroxy-3-methylpentanoate = (S)-3-methyl-2-oxopentanoate + H2O. It participates in amino-acid biosynthesis; L-isoleucine biosynthesis; L-isoleucine from 2-oxobutanoate: step 3/4. Its pathway is amino-acid biosynthesis; L-valine biosynthesis; L-valine from pyruvate: step 3/4. Functionally, functions in the biosynthesis of branched-chain amino acids. Catalyzes the dehydration of (2R,3R)-2,3-dihydroxy-3-methylpentanoate (2,3-dihydroxy-3-methylvalerate) into 2-oxo-3-methylpentanoate (2-oxo-3-methylvalerate) and of (2R)-2,3-dihydroxy-3-methylbutanoate (2,3-dihydroxyisovalerate) into 2-oxo-3-methylbutanoate (2-oxoisovalerate), the penultimate precursor to L-isoleucine and L-valine, respectively. This Listeria welshimeri serovar 6b (strain ATCC 35897 / DSM 20650 / CCUG 15529 / CIP 8149 / NCTC 11857 / SLCC 5334 / V8) protein is Dihydroxy-acid dehydratase.